Reading from the N-terminus, the 386-residue chain is 8-amino-7-oxononanoate synthase (386 aa).

Arginine 23 serves as a coordination point for substrate. 110-111 (GY) serves as a coordination point for pyridoxal 5'-phosphate. Histidine 135 is a binding site for substrate. Pyridoxal 5'-phosphate contacts are provided by serine 181, histidine 209, and threonine 236. Position 239 is an N6-(pyridoxal phosphate)lysine (lysine 239). Threonine 354 provides a ligand contact to substrate.

Belongs to the class-II pyridoxal-phosphate-dependent aminotransferase family. BioF subfamily. As to quaternary structure, homodimer. The cofactor is pyridoxal 5'-phosphate.

It catalyses the reaction 6-carboxyhexanoyl-[ACP] + L-alanine + H(+) = (8S)-8-amino-7-oxononanoate + holo-[ACP] + CO2. It functions in the pathway cofactor biosynthesis; biotin biosynthesis. Its function is as follows. Catalyzes the decarboxylative condensation of pimeloyl-[acyl-carrier protein] and L-alanine to produce 8-amino-7-oxononanoate (AON), [acyl-carrier protein], and carbon dioxide. This chain is 8-amino-7-oxononanoate synthase, found in Thiobacillus denitrificans (strain ATCC 25259 / T1).